Here is a 630-residue protein sequence, read N- to C-terminus: Adagio-like protein 1 (630 aa).

The segment at 1-36 (MEWDSESDGAGSIGAGEEEEEEEEEEEGGFGGGGGG) is disordered. The segment covering 16–28 (GEEEEEEEEEEEG) has biased composition (acidic residues). Residues 48 to 127 (IEGMLRASGP…SEIRKCIDNG (80 aa)) enclose the PAS domain. An S-4a-FMN cysteine modification is found at cysteine 95. The 47-residue stretch at 216–262 (SSLFQLTDEVLCQSILSRLSPRDIASVSSVCRRLYLLTRNEDLWRMV) folds into the F-box domain. 4 Kelch repeats span residues 378–428 (LLVV…TLDG), 430–481 (KLVV…VYGG), 483–535 (KILM…AGPP), and 549–601 (RVLI…VVGG).

Belongs to the ADAGIO family. In terms of processing, FMN binds covalently to cysteine after exposure to blue light and is reversed in the dark.

It is found in the nucleus. It participates in protein modification; protein ubiquitination. Component of an E3 ubiquitin ligase complex that plays a central role in blue light-dependent circadian cycles. Acts as a blue light photoreceptor, due to the presence of FMN, that mediates light-regulated protein degradation of critical clock components by targeting them to the proteasome complex. This chain is Adagio-like protein 1, found in Oryza sativa subsp. japonica (Rice).